The chain runs to 309 residues: MEKYENIKQVGEGAFGQVYKSRRTSDGAVFAIKKMPVDRETGFPFTAIREIKLCKSVINKHIIGLDEIVFEEGFIFVVLEYMPYDLTGLLASGAKLSTDQIRSITSQLIEAVSSMHGMGLVHRDIKPSNILLDCHGMLKLTDFGLTREISGMMTNRVCTLWYRAPELLLGETSYSLKVDAWSVGCIMLEMRLGRPPYRGSDEVSQIKLIFEELGIPQDKYKWSDLLDVDIYSKSRSTEEIIAERYGHLFDEEELKVLSGFLCLTSRKRLSVANSRYFTVISSHKNTYIPLSFEEAHELYTKERKETKKP.

Residues 4-288 (YENIKQVGEG…VISSHKNTYI (285 aa)) form the Protein kinase domain. ATP contacts are provided by residues 10 to 18 (VGEGAFGQV) and Lys-33. Residue Asp-124 is the Proton acceptor of the active site.

The protein belongs to the protein kinase superfamily. CMGC Ser/Thr protein kinase family. CDC2/CDKX subfamily.

The protein resides in the nucleus. It catalyses the reaction L-seryl-[protein] + ATP = O-phospho-L-seryl-[protein] + ADP + H(+). The enzyme catalyses L-threonyl-[protein] + ATP = O-phospho-L-threonyl-[protein] + ADP + H(+). Its function is as follows. May play a role in the control of the eukaryotic cell cycle. The chain is Probable cell division protein kinase ECU11_1290 from Encephalitozoon cuniculi (strain GB-M1) (Microsporidian parasite).